Here is a 156-residue protein sequence, read N- to C-terminus: Small ribosomal subunit protein uS7 (156 aa).

This sequence belongs to the universal ribosomal protein uS7 family. Part of the 30S ribosomal subunit. Contacts proteins S9 and S11.

Its function is as follows. One of the primary rRNA binding proteins, it binds directly to 16S rRNA where it nucleates assembly of the head domain of the 30S subunit. Is located at the subunit interface close to the decoding center, probably blocks exit of the E-site tRNA. The polypeptide is Small ribosomal subunit protein uS7 (Pediococcus pentosaceus (strain ATCC 25745 / CCUG 21536 / LMG 10740 / 183-1w)).